The chain runs to 230 residues: Maleylacetoacetate isomerase (230 aa).

The 89-residue stretch at 7–95 (LRVTLYTYFR…YLDEAFPDNP (89 aa)) folds into the GST N-terminal domain. Glutathione contacts are provided by residues 17–22 (SSCSAR), glutamine 46, valine 60, 79–80 (QS), glutamine 123, and 127–129 (NLR). A GST C-terminal domain is found at 104–226 (NPQQRALVRS…HWRTQQDTPT (123 aa)).

The protein belongs to the GST superfamily. Zeta family. Glutathione is required as a cofactor.

The protein localises to the cytoplasm. The catalysed reaction is 4-maleylacetoacetate = 4-fumarylacetoacetate. The protein operates within amino-acid degradation; L-phenylalanine degradation; acetoacetate and fumarate from L-phenylalanine: step 5/6. This chain is Maleylacetoacetate isomerase (maiA), found in Emericella nidulans (strain FGSC A4 / ATCC 38163 / CBS 112.46 / NRRL 194 / M139) (Aspergillus nidulans).